Here is a 171-residue protein sequence, read N- to C-terminus: Crossover junction endodeoxyribonuclease RuvC (171 aa).

Active-site residues include Asp7, Glu66, and Asp138. The Mg(2+) site is built by Asp7, Glu66, and Asp138.

The protein belongs to the RuvC family. Homodimer which binds Holliday junction (HJ) DNA. The HJ becomes 2-fold symmetrical on binding to RuvC with unstacked arms; it has a different conformation from HJ DNA in complex with RuvA. In the full resolvosome a probable DNA-RuvA(4)-RuvB(12)-RuvC(2) complex forms which resolves the HJ. Mg(2+) serves as cofactor.

The protein resides in the cytoplasm. The catalysed reaction is Endonucleolytic cleavage at a junction such as a reciprocal single-stranded crossover between two homologous DNA duplexes (Holliday junction).. In terms of biological role, the RuvA-RuvB-RuvC complex processes Holliday junction (HJ) DNA during genetic recombination and DNA repair. Endonuclease that resolves HJ intermediates. Cleaves cruciform DNA by making single-stranded nicks across the HJ at symmetrical positions within the homologous arms, yielding a 5'-phosphate and a 3'-hydroxyl group; requires a central core of homology in the junction. The consensus cleavage sequence is 5'-(A/T)TT(C/G)-3'. Cleavage occurs on the 3'-side of the TT dinucleotide at the point of strand exchange. HJ branch migration catalyzed by RuvA-RuvB allows RuvC to scan DNA until it finds its consensus sequence, where it cleaves and resolves the cruciform DNA. The polypeptide is Crossover junction endodeoxyribonuclease RuvC (Francisella tularensis subsp. holarctica (strain FTNF002-00 / FTA)).